Here is a 904-residue protein sequence, read N- to C-terminus: UPF0182 protein CKL_0015 (904 aa).

7 helical membrane-spanning segments follow: residues 9–29 (SLIVILFVCILFLNKIVDFII), 47–67 (LIAICKLMIPLFIIIYISIVL), 96–116 (IFIIVNLIVSFLFSYAFAATY), 157–177 (ILSLIIFLGLITLVTYFTLSV), 208–228 (LAVLAALVMICVSIGYILKCI), 253–273 (YKIIAAASIISAVIIFISILV), and 279–299 (IIVSITVIVALILIKSLSYTV).

Belongs to the UPF0182 family.

It is found in the cell membrane. This is UPF0182 protein CKL_0015 from Clostridium kluyveri (strain ATCC 8527 / DSM 555 / NBRC 12016 / NCIMB 10680 / K1).